Reading from the N-terminus, the 190-residue chain is ATP synthase subunit b, chloroplastic (190 aa).

The helical transmembrane segment at 35 to 55 (LSVVLGVLIFFGKGVCASCLL) threads the bilayer.

The protein belongs to the ATPase B chain family. In terms of assembly, F-type ATPases have 2 components, F(1) - the catalytic core - and F(0) - the membrane proton channel. F(1) has five subunits: alpha(3), beta(3), gamma(1), delta(1), epsilon(1). F(0) has four main subunits: a(1), b(1), b'(1) and c(10-14). The alpha and beta chains form an alternating ring which encloses part of the gamma chain. F(1) is attached to F(0) by a central stalk formed by the gamma and epsilon chains, while a peripheral stalk is formed by the delta, b and b' chains.

The protein resides in the plastid. The protein localises to the chloroplast thylakoid membrane. F(1)F(0) ATP synthase produces ATP from ADP in the presence of a proton or sodium gradient. F-type ATPases consist of two structural domains, F(1) containing the extramembraneous catalytic core and F(0) containing the membrane proton channel, linked together by a central stalk and a peripheral stalk. During catalysis, ATP synthesis in the catalytic domain of F(1) is coupled via a rotary mechanism of the central stalk subunits to proton translocation. Its function is as follows. Component of the F(0) channel, it forms part of the peripheral stalk, linking F(1) to F(0). This is ATP synthase subunit b, chloroplastic from Coffea arabica (Arabian coffee).